A 256-amino-acid chain; its full sequence is MANRERDRELLIPVADFGDKDDGSSSKPSSSSSASSSHQSGHETLSLFIRGWASKKFMTGCVILLPIAVTFYTTWWFIHFVDGFFSPIYALLGINIFGFGFLTSIAFIFLVGVFMSSWLGASVLNLGEWFIKRMPFVRHIYNASKQISTAISPDQNTQAFKEVAIIRHPRVGEYAFGFITSTVVLQNYPTEEELCCVYVPTNHLYIGDILLVNSNDVIRPNLSVREGIEIVVSGGMSMPQILSTLDKPLASIGNES.

Positions 1-10 (MANRERDREL) are enriched in basic and acidic residues. The disordered stretch occupies residues 1 to 39 (MANRERDRELLIPVADFGDKDDGSSSKPSSSSSASSSHQ). At 1-60 (MANRERDRELLIPVADFGDKDDGSSSKPSSSSSASSSHQSGHETLSLFIRGWASKKFMTG) the chain is on the cytoplasmic side. Over residues 25–39 (SSKPSSSSSASSSHQ) the composition is skewed to low complexity. A helical transmembrane segment spans residues 61–81 (CVILLPIAVTFYTTWWFIHFV). Residues 82–93 (DGFFSPIYALLG) are Extracellular-facing. A helical membrane pass occupies residues 94–114 (INIFGFGFLTSIAFIFLVGVF). The Cytoplasmic portion of the chain corresponds to 115 to 256 (MSSWLGASVL…KPLASIGNES (142 aa)).

It belongs to the plant COV1 protein family. Expressed at low levels in flowers, stems, roots and leaves.

It localises to the membrane. The protein is Protein LIKE COV 1 of Arabidopsis thaliana (Mouse-ear cress).